The chain runs to 374 residues: Zinc finger CCCH domain-containing protein 15 homolog (374 aa).

The tract at residues 1–20 is disordered; that stretch reads MPPKQQGPSKKSEQKRKEKV. Residues 10–20 are compositionally biased toward basic and acidic residues; that stretch reads KKSEQKRKEKV. 2 C3H1-type zinc fingers span residues 90–117 and 166–199; these read DPKS…HDLA and VCKY…HCLP.

The protein belongs to the ZC3H15/TMA46 family.

This is Zinc finger CCCH domain-containing protein 15 homolog from Caenorhabditis elegans.